Here is a 161-residue protein sequence, read N- to C-terminus: MPQFDPSSFPSQIVWLVIALVAMYFVMSRLAIPRLAEVLEQRQRLINDDLKQAEALKAETEAAIAAYETALAEARARAHDEIRAVTEAAAKAAEARNAEVAKALNTRIKDGEARIVQARDEALTHVREVAGAVASDIVGKLAGLRVDDAALTAAVAAAIKE.

Residues 13–33 (IVWLVIALVAMYFVMSRLAIP) traverse the membrane as a helical segment.

The protein belongs to the ATPase B chain family. As to quaternary structure, F-type ATPases have 2 components, F(1) - the catalytic core - and F(0) - the membrane proton channel. F(1) has five subunits: alpha(3), beta(3), gamma(1), delta(1), epsilon(1). F(0) has three main subunits: a(1), b(2) and c(10-14). The alpha and beta chains form an alternating ring which encloses part of the gamma chain. F(1) is attached to F(0) by a central stalk formed by the gamma and epsilon chains, while a peripheral stalk is formed by the delta and b chains.

It localises to the cell inner membrane. F(1)F(0) ATP synthase produces ATP from ADP in the presence of a proton or sodium gradient. F-type ATPases consist of two structural domains, F(1) containing the extramembraneous catalytic core and F(0) containing the membrane proton channel, linked together by a central stalk and a peripheral stalk. During catalysis, ATP synthesis in the catalytic domain of F(1) is coupled via a rotary mechanism of the central stalk subunits to proton translocation. Functionally, component of the F(0) channel, it forms part of the peripheral stalk, linking F(1) to F(0). The b'-subunit is a diverged and duplicated form of b found in plants and photosynthetic bacteria. The polypeptide is ATP synthase subunit b 2 (atpF2) (Rhodospirillum rubrum (strain ATCC 11170 / ATH 1.1.1 / DSM 467 / LMG 4362 / NCIMB 8255 / S1)).